The following is a 363-amino-acid chain: NAD(P)H-quinone oxidoreductase subunit 1, chloroplastic (363 aa).

The next 6 helical transmembrane spans lie at 27-47 (VWLL…VLVI), 104-124 (IAVI…HLVL), 127-147 (LSIG…GLLM), 248-268 (YSGI…LVSS), 300-320 (VFGM…FLFI), and 343-363 (FLLP…LFSL).

The protein belongs to the complex I subunit 1 family. As to quaternary structure, NDH is composed of at least 16 different subunits, 5 of which are encoded in the nucleus.

The protein resides in the plastid. The protein localises to the chloroplast thylakoid membrane. It catalyses the reaction a plastoquinone + NADH + (n+1) H(+)(in) = a plastoquinol + NAD(+) + n H(+)(out). The catalysed reaction is a plastoquinone + NADPH + (n+1) H(+)(in) = a plastoquinol + NADP(+) + n H(+)(out). Functionally, NDH shuttles electrons from NAD(P)H:plastoquinone, via FMN and iron-sulfur (Fe-S) centers, to quinones in the photosynthetic chain and possibly in a chloroplast respiratory chain. The immediate electron acceptor for the enzyme in this species is believed to be plastoquinone. Couples the redox reaction to proton translocation, and thus conserves the redox energy in a proton gradient. The protein is NAD(P)H-quinone oxidoreductase subunit 1, chloroplastic of Ranunculus macranthus (Large buttercup).